We begin with the raw amino-acid sequence, 469 residues long: Acyltransferase clz18 (469 aa).

The next 7 membrane-spanning stretches (helical) occupy residues 21-41 (GLLS…LGYD), 70-90 (LFTI…CLFF), 134-154 (LSLL…TGFF), 253-273 (ILAA…PLFW), 346-366 (GLIV…LYSL), 391-411 (IYLI…SWVW), and 424-444 (VGFG…AAIF).

It belongs to the acyltransferase 3 family.

It localises to the membrane. Its pathway is secondary metabolite biosynthesis. Acyltransferase; part of the gene cluster that mediates the biosynthesis of squalestatin S1 (SQS1, also known as zaragozic acid A), a heavily oxidized fungal polyketide that offers potent cholesterol lowering activity by targeting squalene synthase (SS). SQS1 is composed of a 2,8-dioxobicyclic[3.2.1]octane-3,4,5-tricarboxyclic acid core that is connected to two lipophilic polyketide arms. These initial steps feature the priming of an unusual benzoic acid starter unit onto the highly reducing polyketide synthase clz14, followed by oxaloacetate extension and product release to generate a tricarboxylic acid containing product. The phenylalanine ammonia lyase (PAL) clz10 and the acyl-CoA ligase clz12 are involved in transforming phenylalanine into benzoyl-CoA. The citrate synthase-like protein clz17 is involved in connecting the C-alpha-carbons of the hexaketide chain and oxaloacetate to afford the tricarboxylic acid unit. The potential hydrolytic enzymes, clz11 and clz13, are in close proximity to pks2 and may participate in product release. On the other side, the tetraketide arm is synthesized by a the squalestatin tetraketide synthase clz2 and enzymatically esterified to the core in the last biosynthetic step, by the acetyltransferase clz6. The biosynthesis of the tetraketide must involve 3 rounds of chain extension. After the first and second rounds methyl-transfer occurs, and in all rounds of extension the ketoreductase and dehydratase are active. The enoyl reductase and C-MeT of clz2 are not active in the final round of extension. The acetyltransferase clz6 appears to have a broad substrate selectivity for its acyl CoA substrate, allowing the in vitro synthesis of novel squalestatins. The biosynthesis of SQS1 requires several oxidative steps likely performed by oxidoreductases clz3, clz15 and clz16. Finally, in support of the identification of the cluster as being responsible for SQS1 production, the cluster contains a gene encoding a putative squalene synthase (SS) clz20, suggesting a likely mechanism for self-resistance. The sequence is that of Acyltransferase clz18 from Cochliobolus lunatus (Filamentous fungus).